The following is a 505-amino-acid chain: Maturase K (505 aa).

Belongs to the intron maturase 2 family. MatK subfamily.

The protein localises to the plastid. It is found in the chloroplast. Functionally, usually encoded in the trnK tRNA gene intron. Probably assists in splicing its own and other chloroplast group II introns. The polypeptide is Maturase K (Rhizophora stylosa (Bakau)).